The primary structure comprises 165 residues: PARP-type zinc finger-containing protein C13F5.07c (165 aa).

Residues 8 to 100 form a PARP-type; degenerate zinc finger; it reads YRIEIAPNNR…KVVDAINEGH (93 aa). Positions 100-114 are enriched in basic and acidic residues; it reads HVSESDERESRKLGE. The disordered stretch occupies residues 100–165; sequence HVSESDERES…TDGSEAYEDD (66 aa). Over residues 117 to 128 the composition is skewed to polar residues; that stretch reads NVNSQKLKTSSP. The segment covering 131–141 has biased composition (basic residues); the sequence is VVRKNKRHHTT. Positions 149-165 are enriched in acidic residues; sequence SDLDAEFTDGSEAYEDD.

The protein resides in the cytoplasm. Its subcellular location is the nucleus. The sequence is that of PARP-type zinc finger-containing protein C13F5.07c from Schizosaccharomyces pombe (strain 972 / ATCC 24843) (Fission yeast).